A 447-amino-acid polypeptide reads, in one-letter code: GTPase Der (447 aa).

EngA-type G domains lie at 4 to 165 and 180 to 357; these read QIIT…PEEE and LQIV…KIWN. GTP contacts are provided by residues 10 to 17, 57 to 61, 119 to 122, 186 to 193, 233 to 237, and 298 to 301; these read GRPNVGKS, DTPGL, NKCE, GRPNAGKS, DTAGL, and NKWD. The 86-residue stretch at 358-443 folds into the KH-like domain; that stretch reads KKITTSKLNE…PIRFTYVKTK (86 aa).

It belongs to the TRAFAC class TrmE-Era-EngA-EngB-Septin-like GTPase superfamily. EngA (Der) GTPase family. Associates with the 50S ribosomal subunit.

GTPase that plays an essential role in the late steps of ribosome biogenesis. The sequence is that of GTPase Der from Rickettsia rickettsii (strain Iowa).